The primary structure comprises 189 residues: Elongation factor P (189 aa).

Lysine 34 carries the post-translational modification N6-(3,6-diaminohexanoyl)-5-hydroxylysine.

It belongs to the elongation factor P family. May be beta-lysylated on the epsilon-amino group of Lys-34 by the combined action of EpmA and EpmB, and then hydroxylated on the C5 position of the same residue by EpmC (if this protein is present). Lysylation is critical for the stimulatory effect of EF-P on peptide-bond formation. The lysylation moiety may extend toward the peptidyltransferase center and stabilize the terminal 3-CCA end of the tRNA. Hydroxylation of the C5 position on Lys-34 may allow additional potential stabilizing hydrogen-bond interactions with the P-tRNA.

The protein resides in the cytoplasm. The protein operates within protein biosynthesis; polypeptide chain elongation. Its function is as follows. Involved in peptide bond synthesis. Alleviates ribosome stalling that occurs when 3 or more consecutive Pro residues or the sequence PPG is present in a protein, possibly by augmenting the peptidyl transferase activity of the ribosome. Modification of Lys-34 is required for alleviation. The chain is Elongation factor P from Francisella philomiragia subsp. philomiragia (strain ATCC 25017 / CCUG 19701 / FSC 153 / O#319-036).